Consider the following 622-residue polypeptide: 3-(3-hydroxy-phenyl)propionate/3-hydroxycinnamic acid hydroxylase (622 aa).

FAD is bound by residues 20 to 49 (DVAIIGAGPVGLMIANYLGLQGVRVVVLEK) and 288 to 298 (FRVDRVLLAGD).

The protein belongs to the PheA/TfdB FAD monooxygenase family. The cofactor is FAD.

It catalyses the reaction 3-(3-hydroxyphenyl)propanoate + NADH + O2 + H(+) = 3-(2,3-dihydroxyphenyl)propanoate + NAD(+) + H2O. The catalysed reaction is (2E)-3-(3-hydroxyphenyl)prop-2-enoate + NADH + O2 + H(+) = (2E)-3-(2,3-dihydroxyphenyl)prop-2-enoate + NAD(+) + H2O. It functions in the pathway aromatic compound metabolism; 3-phenylpropanoate degradation. In terms of biological role, catalyzes the insertion of one atom of molecular oxygen into position 2 of the phenyl ring of 3-(3-hydroxyphenyl)propionate (3-HPP) and hydroxycinnamic acid (3HCI). The polypeptide is 3-(3-hydroxy-phenyl)propionate/3-hydroxycinnamic acid hydroxylase (Paraburkholderia xenovorans (strain LB400)).